Consider the following 160-residue polypeptide: 3-dehydroquinate dehydratase (160 aa).

The active-site Proton acceptor is the Y22. N73, H79, and D86 together coordinate substrate. Residue H99 is the Proton donor of the active site. Residues 100-101 and R110 each bind substrate; that span reads IS.

It belongs to the type-II 3-dehydroquinase family. As to quaternary structure, homododecamer.

It carries out the reaction 3-dehydroquinate = 3-dehydroshikimate + H2O. It participates in metabolic intermediate biosynthesis; chorismate biosynthesis; chorismate from D-erythrose 4-phosphate and phosphoenolpyruvate: step 3/7. In terms of biological role, catalyzes a trans-dehydration via an enolate intermediate. The protein is 3-dehydroquinate dehydratase of Campylobacter lari (strain RM2100 / D67 / ATCC BAA-1060).